A 502-amino-acid chain; its full sequence is uncharacterized protein (502 aa).

The helical transmembrane segment at 1-21 threads the bilayer; the sequence is MKIFLVILSVFFFNGCFGLAY. PLD phosphodiesterase domains follow at residues 162–189 and 396–423; these read IKKR…GDNY and TKHS…DPRS.

The protein belongs to the phospholipase D family. Cardiolipin synthase subfamily.

Its subcellular location is the cell membrane. This is an uncharacterized protein from Helicobacter pylori (strain J99 / ATCC 700824) (Campylobacter pylori J99).